The primary structure comprises 157 residues: Probable calcium-binding protein CML15 (157 aa).

EF-hand domains follow at residues aspartate 3 to lysine 38, proline 39 to glutamate 74, isoleucine 78 to proline 113, and leucine 114 to aspartate 149. Ca(2+) contacts are provided by aspartate 16, aspartate 18, aspartate 20, serine 22, glutamate 27, aspartate 52, asparagine 54, asparagine 56, glutamate 63, aspartate 91, aspartate 93, asparagine 95, glutamate 102, aspartate 127, asparagine 129, aspartate 131, and glutamate 138.

In terms of biological role, potential calcium sensor. The protein is Probable calcium-binding protein CML15 (CML15) of Arabidopsis thaliana (Mouse-ear cress).